The chain runs to 218 residues: Adenylate kinase (218 aa).

10-15 is a binding site for ATP; it reads GAGKGT. The interval 30–59 is NMP; the sequence is STGDIFREAIAKGTELGRKVQDIVNSGNLV. AMP contacts are provided by residues Thr31, Arg36, 57–59, 85–88, and Gln92; these read NLV and GYPR. Positions 126–163 are LID; sequence TRRVCSKCGKVYNVITLPSKVEGICDDCGGTLIQRDDD. Position 127 (Arg127) interacts with ATP. Zn(2+)-binding residues include Cys130 and Cys133. 136 to 137 serves as a coordination point for ATP; that stretch reads VY. 2 residues coordinate Zn(2+): Cys150 and Cys153. Residues Arg160 and Arg171 each contribute to the AMP site. Lys199 is a binding site for ATP.

The protein belongs to the adenylate kinase family. As to quaternary structure, monomer.

It is found in the cytoplasm. It catalyses the reaction AMP + ATP = 2 ADP. The protein operates within purine metabolism; AMP biosynthesis via salvage pathway; AMP from ADP: step 1/1. Its function is as follows. Catalyzes the reversible transfer of the terminal phosphate group between ATP and AMP. Plays an important role in cellular energy homeostasis and in adenine nucleotide metabolism. This is Adenylate kinase from Fervidobacterium nodosum (strain ATCC 35602 / DSM 5306 / Rt17-B1).